The primary structure comprises 287 residues: rRNA adenine N-6-methyltransferase (287 aa).

Residues 1-13 (MKKKNHKYRGKKL) are compositionally biased toward basic residues. Residues 1-21 (MKKKNHKYRGKKLNRGESPNF) form a disordered region. S-adenosyl-L-methionine-binding residues include His25, Met27, Gly52, Glu73, Asp98, and Asn114.

This sequence belongs to the class I-like SAM-binding methyltransferase superfamily. rRNA adenine N(6)-methyltransferase family.

Its function is as follows. Involved in erythromycin resistance. The protein is rRNA adenine N-6-methyltransferase (ermD) of Bacillus licheniformis.